The primary structure comprises 154 residues: Proline dehydrogenase transcriptional activator (154 aa).

The HTH asnC-type domain occupies 5–66; the sequence is IDATDRRILH…MLSPIRLGLI (62 aa). The H-T-H motif DNA-binding region spans 24–43; the sequence is VTELARKVGLSKTPVAARIR.

In terms of biological role, transcriptional activator of the putA gene in response to proline. The polypeptide is Proline dehydrogenase transcriptional activator (putR) (Rhodobacter capsulatus (Rhodopseudomonas capsulata)).